The following is a 265-amino-acid chain: Deoxycytidine kinase 1 (265 aa).

30–38 (GNIAAGKST) contributes to the ATP binding site. Substrate is bound by residues Glu55, Tyr88, and Gln99. The active-site Proton acceptor is Glu129. Arg130 and Asp135 together coordinate substrate. ATP is bound at residue 190–194 (RVYTR). Glu199 lines the substrate pocket. Residue 242–244 (EDF) coordinates ATP.

It belongs to the DCK/DGK family. Homodimer.

The protein resides in the nucleus. It carries out the reaction 2'-deoxycytidine + a ribonucleoside 5'-triphosphate = dCMP + a ribonucleoside 5'-diphosphate + H(+). The enzyme catalyses 2'-deoxyguanosine + ATP = dGMP + ADP + H(+). The catalysed reaction is 2'-deoxyadenosine + ATP = dAMP + ADP + H(+). In terms of biological role, phosphorylates the deoxyribonucleosides deoxyadenosine, deoxycytidine and deoxyguanosine with highest activity against deoxycytidine followed by deadenosine and deoxyguanosine. Shows only very minor activity against deoxyuridine and deoxythymidine. In Xenopus laevis (African clawed frog), this protein is Deoxycytidine kinase 1.